Consider the following 83-residue polypeptide: Neurotoxin LmNaTx10 (83 aa).

Positions 1 to 19 (MNFLIFIAVASSLALGALC) are cleaved as a signal peptide. An LCN-type CS-alpha/beta domain is found at 21–80 (KEGYPYDGNNCRYICFRNQYCDDLCKKLKGESGYCYGWNQSCYCYGLPDTEKTKPDKRCH). Intrachain disulfides connect Cys-31–Cys-79, Cys-35–Cys-55, Cys-41–Cys-62, and Cys-45–Cys-64.

It belongs to the long (4 C-C) scorpion toxin superfamily. Sodium channel inhibitor family. Alpha subfamily. In terms of tissue distribution, expressed by the venom gland.

It is found in the secreted. Functionally, binds voltage-independently at site-3 of voltage-gated sodium channels (Nav) and inhibits the inactivation of the activated channels, thereby blocking neuronal transmission. In Lychas mucronatus (Chinese swimming scorpion), this protein is Neurotoxin LmNaTx10.